A 360-amino-acid polypeptide reads, in one-letter code: Phospho-N-acetylmuramoyl-pentapeptide-transferase (360 aa).

A run of 10 helical transmembrane segments spans residues 27–47 (GALITSALIVFIFGPTIINSL), 71–91 (TPTMGGLMILSGIIGSSLLWA), 93–113 (LSSIYVWVVLLVTLGFGSIGF), 134–154 (LGLEFIIAGIAAWVIMHNGQA), 168–188 (FIINLGWFFIPFSCFVIVGAG), 199–219 (GLAIVPIMIAAASFGVIAYLS), 239–259 (LAVVLGAVIGAGLGFLWFNAP), 262–282 (AIFMGDTGSLAMGGLIGTVAV), 288–308 (IVLVIVGGLFVVEILSVIIQV), and 337–357 (QVVIRFWIIAVILALVGLSTL).

It belongs to the glycosyltransferase 4 family. MraY subfamily. Mg(2+) serves as cofactor.

It localises to the cell inner membrane. It carries out the reaction UDP-N-acetyl-alpha-D-muramoyl-L-alanyl-gamma-D-glutamyl-meso-2,6-diaminopimeloyl-D-alanyl-D-alanine + di-trans,octa-cis-undecaprenyl phosphate = di-trans,octa-cis-undecaprenyl diphospho-N-acetyl-alpha-D-muramoyl-L-alanyl-D-glutamyl-meso-2,6-diaminopimeloyl-D-alanyl-D-alanine + UMP. It participates in cell wall biogenesis; peptidoglycan biosynthesis. In terms of biological role, catalyzes the initial step of the lipid cycle reactions in the biosynthesis of the cell wall peptidoglycan: transfers peptidoglycan precursor phospho-MurNAc-pentapeptide from UDP-MurNAc-pentapeptide onto the lipid carrier undecaprenyl phosphate, yielding undecaprenyl-pyrophosphoryl-MurNAc-pentapeptide, known as lipid I. This chain is Phospho-N-acetylmuramoyl-pentapeptide-transferase, found in Mesorhizobium japonicum (strain LMG 29417 / CECT 9101 / MAFF 303099) (Mesorhizobium loti (strain MAFF 303099)).